Reading from the N-terminus, the 508-residue chain is 25-hydroxyvitamin D-1 alpha hydroxylase, mitochondrial (508 aa).

Cys455 contributes to the heme binding site.

The protein belongs to the cytochrome P450 family. Heme is required as a cofactor. In terms of tissue distribution, kidney.

The protein resides in the mitochondrion membrane. The catalysed reaction is calcidiol + 2 reduced [adrenodoxin] + O2 + 2 H(+) = calcitriol + 2 oxidized [adrenodoxin] + H2O. The enzyme catalyses secalciferol + 2 reduced [adrenodoxin] + O2 + 2 H(+) = calcitetrol + 2 oxidized [adrenodoxin] + H2O. It carries out the reaction 25-hydroxy-24-oxocalciol + 2 reduced [adrenodoxin] + O2 + 2 H(+) = (1S)-1,25-dihydroxy-24-oxocalciol + 2 oxidized [adrenodoxin] + H2O. It catalyses the reaction 25-hydroxyvitamin D2 + 2 reduced [adrenodoxin] + O2 + 2 H(+) = 1alpha,25-dihydroxyvitamin D2 + 2 oxidized [adrenodoxin] + H2O. It functions in the pathway hormone biosynthesis; vitamin D biosynthesis. With respect to regulation, activated by cardiolipin and dioleoyl phosphatidylethanolamine (DOPE), phospholipids found in the inner mitochondrial membrane. Inhibited by high substrate concentration. A cytochrome P450 monooxygenase involved in vitamin D metabolism and in calcium and phosphorus homeostasis. Catalyzes the rate-limiting step in the activation of vitamin D in the kidney, namely the hydroxylation of 25-hydroxyvitamin D3/calcidiol at the C1alpha-position to form the hormonally active form of vitamin D3, 1alpha,25-dihydroxyvitamin D3/calcitriol that acts via the vitamin D receptor (VDR). Has 1alpha-hydroxylase activity on vitamin D intermediates of the CYP24A1-mediated inactivation pathway. Converts 24R,25-dihydroxyvitamin D3/secalciferol to 1-alpha,24,25-trihydroxyvitamin D3, an active ligand of VDR. Also active on 25-hydroxyvitamin D2. Mechanistically, uses molecular oxygen inserting one oxygen atom into a substrate, and reducing the second into a water molecule, with two electrons provided by NADPH via FDXR/adrenodoxin reductase and FDX1/adrenodoxin. The protein is 25-hydroxyvitamin D-1 alpha hydroxylase, mitochondrial (CYP27B1) of Homo sapiens (Human).